A 666-amino-acid chain; its full sequence is Probable potassium transport system protein Kup (666 aa).

12 helical membrane-spanning segments follow: residues 16–36, 58–78, 98–118, 141–161, 165–185, 221–241, 253–273, 299–319, 343–363, 373–393, 399–419, and 424–444; these read GFIIALGIVYGDIGTSPLYTM, ISLIIWTLTLITTIKYVLIAL, ISPWLIIPAMIGGATLLSDGA, IYQNQTNVIITTLVILIVLFG, FGTGFIGKIFGPVMFIWFSFL, IFILGSIFLATTGAEALYSDL, WPFVKMCIVLSYCGQAAWILA, LATLAAIIASQALISGSFTLI, LYIPVINWILFAVTSCTVLAF, YGLAITITMLMTTILLKYYLI, PILAHLAMAFFALVEFIFFLA, and FMHGGYAVVILALAIVFVMFI.

It belongs to the HAK/KUP transporter (TC 2.A.72) family.

The protein resides in the cell membrane. The enzyme catalyses K(+)(in) + H(+)(in) = K(+)(out) + H(+)(out). Functionally, transport of potassium into the cell. Likely operates as a K(+):H(+) symporter. This chain is Probable potassium transport system protein Kup, found in Streptococcus pyogenes serotype M28 (strain MGAS6180).